A 154-amino-acid polypeptide reads, in one-letter code: UPF0756 membrane protein CKR_1028 (154 aa).

The next 4 helical transmembrane spans lie at 5 to 25 (IILI…VALA), 48 to 68 (NGLF…IADG), 82 to 102 (WLGI…GLGM), and 113 to 133 (IMPA…GVPV).

It belongs to the UPF0756 family.

It localises to the cell membrane. This is UPF0756 membrane protein CKR_1028 from Clostridium kluyveri (strain NBRC 12016).